The following is a 430-amino-acid chain: MLDINYIRQNPEEVATMLHDRQLQGDEPKLQRLLFIDTERRTLVQKTDELKALRNTRSKEIAELKKSGSGSADQLIADMQAVGEEIAGLDSRLSALNMEMEEILLALPNRLDPSVPVGRTAEDNLVFGEPVHFPHPLEFDVKNHLELGKALGILDFERGAKVTGAGFPVYVGKGARLERALINFMLDRHTEEHGYTEVFPPFLVNRDSLRGTGQWPKFADQVYHMEEDELYAIPTAEVPVTNLHRDEMLSAEALPISYAAYSACFRREAGSYGKDTRGFLRVHQFNKVEMVKFTRPEESYAALETIRGHAEAILCALEIPYRVLLLCSGDISANAAKCYDIEVWSPAERKYLEASSCSNFEDYQARRANIRFKADGKSKPEFVHTLNGSGLATSRLMVSIIEHYQTLEGGIRVPEVLVPYTGFSQISPSC.

Residue 235-237 (TAE) coordinates L-serine. ATP is bound by residues 266–268 (RRE) and Val-282. L-serine is bound at residue Glu-289. 353-356 (EASS) lines the ATP pocket. Ser-389 lines the L-serine pocket.

It belongs to the class-II aminoacyl-tRNA synthetase family. Type-1 seryl-tRNA synthetase subfamily. Homodimer. The tRNA molecule binds across the dimer.

The protein resides in the cytoplasm. The catalysed reaction is tRNA(Ser) + L-serine + ATP = L-seryl-tRNA(Ser) + AMP + diphosphate + H(+). It carries out the reaction tRNA(Sec) + L-serine + ATP = L-seryl-tRNA(Sec) + AMP + diphosphate + H(+). It participates in aminoacyl-tRNA biosynthesis; selenocysteinyl-tRNA(Sec) biosynthesis; L-seryl-tRNA(Sec) from L-serine and tRNA(Sec): step 1/1. In terms of biological role, catalyzes the attachment of serine to tRNA(Ser). Is also able to aminoacylate tRNA(Sec) with serine, to form the misacylated tRNA L-seryl-tRNA(Sec), which will be further converted into selenocysteinyl-tRNA(Sec). The chain is Serine--tRNA ligase from Chlorobium luteolum (strain DSM 273 / BCRC 81028 / 2530) (Pelodictyon luteolum).